A 348-amino-acid polypeptide reads, in one-letter code: Ricin B-like lectin R40C1 (348 aa).

The disordered stretch occupies residues 1 to 26 (MFGFGHHGHHGQDQPPQHHGGGGGGA). The Ricin B-type lectin domain maps to 199 to 345 (TVRIFCKADE…CEGDNQRWKI (147 aa)).

As to expression, expressed in roots and shoots.

Functionally, lectin which binds carbohydrates in vitro. Interacts through its lectin domain with glycan structures containing specific motifs. This Oryza sativa subsp. japonica (Rice) protein is Ricin B-like lectin R40C1.